The primary structure comprises 244 residues: 5-oxoprolinase subunit A (244 aa).

Belongs to the LamB/PxpA family. Forms a complex composed of PxpA, PxpB and PxpC.

The enzyme catalyses 5-oxo-L-proline + ATP + 2 H2O = L-glutamate + ADP + phosphate + H(+). Its function is as follows. Catalyzes the cleavage of 5-oxoproline to form L-glutamate coupled to the hydrolysis of ATP to ADP and inorganic phosphate. In Escherichia coli (strain K12), this protein is 5-oxoprolinase subunit A.